A 113-amino-acid polypeptide reads, in one-letter code: Nucleoid-associated protein Syncc9605_0027 (113 aa).

This sequence belongs to the YbaB/EbfC family. Homodimer.

The protein localises to the cytoplasm. Its subcellular location is the nucleoid. Functionally, binds to DNA and alters its conformation. May be involved in regulation of gene expression, nucleoid organization and DNA protection. The protein is Nucleoid-associated protein Syncc9605_0027 of Synechococcus sp. (strain CC9605).